The primary structure comprises 403 residues: MTKIMAVNAGSSSLKFQLLEMPTEELLAVGLVERVGKEDAIFTIKYGEGQKFNVVTPLHTHKEAVELTLEKLIELDIIQSFDEISGVGHRVLHGKELYADSVVIDDEVMKNIESFTELGPLHIPPNLTGIRAFQAILPNVPQVAVFDTAFHQSMPEENFLYSLPYEYYTEHGVRKYGFHGTSHKYVTQRAAELLGRPLEDLRLISCHLGSGASIAAVAGGRSIDTTMGFTPLEGITMGTRSGSLDPALIPFLMQKTGKSAEDVLNVMNKESGVYGLSGISSDLRDIEQAAAEGNHRAEVSLKIFSNRIHGYIGQYAAEMNGVDAIIFTAGVGENSDVIRERILRGLEFMGVYWDPSLNNGARGKELFINYPHSPVKVIIIPTNEELVIARDTVRIANLVEAHA.

Asn8 lines the Mg(2+) pocket. An ATP-binding site is contributed by Lys15. Position 90 (Arg90) interacts with substrate. The Proton donor/acceptor role is filled by Asp147. ATP-binding positions include 207 to 211, 282 to 284, and 330 to 334; these read HLGSG, DLR, and GVGEN. Glu384 lines the Mg(2+) pocket.

Belongs to the acetokinase family. As to quaternary structure, homodimer. Requires Mg(2+) as cofactor. Mn(2+) serves as cofactor.

The protein localises to the cytoplasm. It carries out the reaction acetate + ATP = acetyl phosphate + ADP. It participates in metabolic intermediate biosynthesis; acetyl-CoA biosynthesis; acetyl-CoA from acetate: step 1/2. Its function is as follows. Catalyzes the formation of acetyl phosphate from acetate and ATP. Can also catalyze the reverse reaction. In Exiguobacterium sp. (strain ATCC BAA-1283 / AT1b), this protein is Acetate kinase.